We begin with the raw amino-acid sequence, 425 residues long: Serine--tRNA ligase (425 aa).

Residue 231-233 (TAE) coordinates L-serine. ATP is bound at residue 262 to 264 (RSE). Residue glutamate 285 coordinates L-serine. 349-352 (EISS) contacts ATP. Serine 385 contacts L-serine.

It belongs to the class-II aminoacyl-tRNA synthetase family. Type-1 seryl-tRNA synthetase subfamily. As to quaternary structure, homodimer. The tRNA molecule binds across the dimer.

It is found in the cytoplasm. The enzyme catalyses tRNA(Ser) + L-serine + ATP = L-seryl-tRNA(Ser) + AMP + diphosphate + H(+). The catalysed reaction is tRNA(Sec) + L-serine + ATP = L-seryl-tRNA(Sec) + AMP + diphosphate + H(+). It functions in the pathway aminoacyl-tRNA biosynthesis; selenocysteinyl-tRNA(Sec) biosynthesis; L-seryl-tRNA(Sec) from L-serine and tRNA(Sec): step 1/1. Its function is as follows. Catalyzes the attachment of serine to tRNA(Ser). Is also able to aminoacylate tRNA(Sec) with serine, to form the misacylated tRNA L-seryl-tRNA(Sec), which will be further converted into selenocysteinyl-tRNA(Sec). In Alkaliphilus oremlandii (strain OhILAs) (Clostridium oremlandii (strain OhILAs)), this protein is Serine--tRNA ligase.